Reading from the N-terminus, the 498-residue chain is AP2-like ethylene-responsive transcription factor AIL7 (498 aa).

Positions 186-195 (TSDQPLSCNN) are enriched in polar residues. Residues 186–220 (TSDQPLSCNNGERGGNSNKKKTVSKKETSDDSKKK) form a disordered region. The segment covering 209 to 220 (SKKETSDDSKKK) has biased composition (basic and acidic residues). 2 consecutive DNA-binding regions (AP2/ERF) follow at residues 231–297 (IYRG…TNFP) and 333–391 (IYRG…TNFE). Positions 422–451 (ESPSSSSSDHNLQQQQLLPSSSPSDQNPNS) are enriched in low complexity. Residues 422–452 (ESPSSSSSDHNLQQQQLLPSSSPSDQNPNSI) form a disordered region.

It belongs to the AP2/ERF transcription factor family. AP2 subfamily. In terms of assembly, interacts with HDG2, and possibly with HDG3, HDG7, ANL2, ATML1 and PDF2. As to expression, expressed in roots, seedlings, inflorescence, and siliques. Also detected at low levels in leaves.

The protein localises to the nucleus. Functionally, probably acts as a transcriptional activator. Binds to the GCC-box pathogenesis-related promoter element. May be involved in the regulation of gene expression by stress factors and by components of stress signal transduction pathways. In Arabidopsis thaliana (Mouse-ear cress), this protein is AP2-like ethylene-responsive transcription factor AIL7.